Consider the following 249-residue polypeptide: Tryptophan synthase alpha chain (249 aa).

Residues E43 and D54 each act as proton acceptor in the active site.

Belongs to the TrpA family. In terms of assembly, tetramer of two alpha and two beta chains.

The enzyme catalyses (1S,2R)-1-C-(indol-3-yl)glycerol 3-phosphate + L-serine = D-glyceraldehyde 3-phosphate + L-tryptophan + H2O. It functions in the pathway amino-acid biosynthesis; L-tryptophan biosynthesis; L-tryptophan from chorismate: step 5/5. In terms of biological role, the alpha subunit is responsible for the aldol cleavage of indoleglycerol phosphate to indole and glyceraldehyde 3-phosphate. The protein is Tryptophan synthase alpha chain of Campylobacter jejuni subsp. jejuni serotype O:6 (strain 81116 / NCTC 11828).